Consider the following 210-residue polypeptide: dTTP/UTP pyrophosphatase (210 aa).

The active-site Proton acceptor is aspartate 80.

It belongs to the Maf family. YhdE subfamily. Requires a divalent metal cation as cofactor.

The protein localises to the cytoplasm. It catalyses the reaction dTTP + H2O = dTMP + diphosphate + H(+). It carries out the reaction UTP + H2O = UMP + diphosphate + H(+). In terms of biological role, nucleoside triphosphate pyrophosphatase that hydrolyzes dTTP and UTP. May have a dual role in cell division arrest and in preventing the incorporation of modified nucleotides into cellular nucleic acids. The polypeptide is dTTP/UTP pyrophosphatase (Nitratidesulfovibrio vulgaris (strain ATCC 29579 / DSM 644 / CCUG 34227 / NCIMB 8303 / VKM B-1760 / Hildenborough) (Desulfovibrio vulgaris)).